The sequence spans 199 residues: MQIKPFEENKPYPEWDPDEPDKVPGIPNWNRNFGNIIIEFDKGTRTCYYHRKKKNKYDVECGDYRIKITYSQKNWNKKVVYDNDAWKWLVDCLDPTEINKFLCHLCKILDMNIDKDVYDYLINNVNFSVNNNDLRALLYYFWHRAIIEDRIYSQKKGYNGRKQVIGATYEVLKELRNNQNRVYLYEKCDEIYKMAKKKL.

This is an uncharacterized protein from Methanocaldococcus jannaschii (strain ATCC 43067 / DSM 2661 / JAL-1 / JCM 10045 / NBRC 100440) (Methanococcus jannaschii).